Here is a 169-residue protein sequence, read N- to C-terminus: Lutropin/choriogonadotropin subunit beta (169 aa).

The signal sequence occupies residues 1 to 20 (MEMLQGLLLWMLLSVGGVWA). Intrachain disulfides connect Cys29/Cys77, Cys43/Cys92, Cys46/Cys130, Cys54/Cys108, Cys58/Cys110, and Cys113/Cys120. Residue Asn33 is glycosylated (N-linked (GlcNAc...) asparagine). A disordered region spans residues 131–169 (APQASSSSKDPPSQPLTSTSTPTPGASNRSSHPLPIKTS). Residues 145-154 (PLTSTSTPTP) are compositionally biased toward low complexity. Over residues 155–169 (GASNRSSHPLPIKTS) the composition is skewed to polar residues. N-linked (GlcNAc...) asparagine glycosylation occurs at Asn158.

Belongs to the glycoprotein hormones subunit beta family. In terms of assembly, heterodimer of a common alpha chain and a unique beta chain which confers biological specificity to thyrotropin, lutropin, follitropin and gonadotropin.

It localises to the secreted. Promotes spermatogenesis and ovulation by stimulating the testes and ovaries to synthesize steroids. The sequence is that of Lutropin/choriogonadotropin subunit beta (LHB) from Equus quagga burchellii (Burchell's zebra).